Reading from the N-terminus, the 440-residue chain is Argininosuccinate lyase (440 aa).

Belongs to the lyase 1 family. Argininosuccinate lyase subfamily.

Its subcellular location is the cytoplasm. It carries out the reaction 2-(N(omega)-L-arginino)succinate = fumarate + L-arginine. Its pathway is amino-acid biosynthesis; L-arginine biosynthesis; L-arginine from L-ornithine and carbamoyl phosphate: step 3/3. This is Argininosuccinate lyase from Clostridium botulinum (strain 657 / Type Ba4).